The chain runs to 363 residues: Osmoprotective compounds uptake ATP-binding protein GgtA (363 aa).

The region spanning 4 to 234 is the ABC transporter domain; sequence VSFEQVTKQF…PANLFVAGFI (231 aa). 36–43 contacts ATP; that stretch reads GPSGCGKT.

It belongs to the ABC transporter superfamily. As to quaternary structure, the complex is composed of two ATP-binding proteins (GgtA), two transmembrane proteins (GgtC and GgtD) and a solute-binding protein (GgtB).

It is found in the cell membrane. In terms of biological role, part of the ABC transporter complex GgtABCD involved in the uptake of the osmoprotective compounds glucosylglycerol (GG), sucrose and trehalose. Responsible for energy coupling to the transport system. The chain is Osmoprotective compounds uptake ATP-binding protein GgtA from Synechocystis sp. (strain ATCC 27184 / PCC 6803 / Kazusa).